The chain runs to 435 residues: Glutamine synthetase (435 aa).

The GS beta-grasp domain maps to 12-94; that stretch reads KSIKYFMISY…VAADCVMDDR (83 aa). Residues 100 to 435 form the GS catalytic domain; that stretch reads PRVVLKRLVA…QWERDSTLDI (336 aa). Residues E123, E125, E180, and E187 each coordinate Mg(2+). G232 is an L-glutamate binding site. H236 is a Mg(2+) binding site. S240 contributes to the ATP binding site. L-glutamate is bound by residues R291 and R315. ATP-binding residues include R315 and R320. E328 lines the Mg(2+) pocket. An L-glutamate-binding site is contributed by R330.

It belongs to the glutamine synthetase family. As to quaternary structure, homooctamer. Mg(2+) is required as a cofactor.

It carries out the reaction L-glutamate + NH4(+) + ATP = L-glutamine + ADP + phosphate + H(+). Catalyzes the ATP-dependent biosynthesis of glutamine from glutamate and ammonia. The chain is Glutamine synthetase from Rhizobium leguminosarum bv. phaseoli.